The chain runs to 523 residues: NAD(P)H-quinone oxidoreductase subunit 2 (523 aa).

Helical transmembrane passes span 29 to 49 (AVLP…VDLA), 57 to 77 (WVPP…ALQW), 94 to 114 (LAVA…LISW), 132 to 152 (LAAT…SIFI), 182 to 202 (LLVG…LYGL), 221 to 241 (PIAA…IAAV), 255 to 275 (PTPV…ALAL), 291 to 311 (LLFT…ALAQ), 317 to 337 (MLAY…VCGT), 345 to 365 (VLYM…IILF), 389 to 409 (LGLS…GFFG), 424 to 444 (LLVV…ISVI), and 477 to 497 (VALI…NPLF).

It belongs to the complex I subunit 2 family. As to quaternary structure, NDH-1 can be composed of about 15 different subunits; different subcomplexes with different compositions have been identified which probably have different functions.

The protein localises to the cellular thylakoid membrane. The catalysed reaction is a plastoquinone + NADH + (n+1) H(+)(in) = a plastoquinol + NAD(+) + n H(+)(out). It carries out the reaction a plastoquinone + NADPH + (n+1) H(+)(in) = a plastoquinol + NADP(+) + n H(+)(out). In terms of biological role, NDH-1 shuttles electrons from an unknown electron donor, via FMN and iron-sulfur (Fe-S) centers, to quinones in the respiratory and/or the photosynthetic chain. The immediate electron acceptor for the enzyme in this species is believed to be plastoquinone. Couples the redox reaction to proton translocation, and thus conserves the redox energy in a proton gradient. Cyanobacterial NDH-1 also plays a role in inorganic carbon-concentration. The sequence is that of NAD(P)H-quinone oxidoreductase subunit 2 from Synechococcus sp. (strain CC9902).